The following is a 568-amino-acid chain: Pyruvate carboxylase subunit B (568 aa).

One can recognise a Pyruvate carboxyltransferase domain in the interval 4 to 264 (IKVVETAFRD…DTGLDLEILK (261 aa)). Residues 12–16 (RDAHQ) and arginine 83 contribute to the substrate site. Position 13 (aspartate 13) interacts with a divalent metal cation. Positions 174, 203, and 205 each coordinate a divalent metal cation. An N6-carboxylysine modification is found at lysine 174. Threonine 339 contacts substrate. Positions 493-568 (PEPVDVEGAV…ETGDIIMVIK (76 aa)) constitute a Biotinyl-binding domain. Lysine 534 is subject to N6-biotinyllysine.

In terms of assembly, heterooctamer of four A and four B subunits. Mg(2+) is required as a cofactor. It depends on Mn(2+) as a cofactor. The cofactor is Co(2+).

The enzyme catalyses hydrogencarbonate + pyruvate + ATP = oxaloacetate + ADP + phosphate + H(+). Inhibited by ADP and alpha-ketoglutarate. Pyruvate carboxylase catalyzes a 2-step reaction, involving the ATP-dependent carboxylation of the covalently attached biotin in the first step and the transfer of the carboxyl group to pyruvate in the second. In Methanothermobacter thermautotrophicus (strain ATCC 29096 / DSM 1053 / JCM 10044 / NBRC 100330 / Delta H) (Methanobacterium thermoautotrophicum), this protein is Pyruvate carboxylase subunit B (pycB).